Here is a 237-residue protein sequence, read N- to C-terminus: NADPH-dependent FMN reductase ArsH (237 aa).

FMN contacts are provided by residues 39-46 (SNRECSYS) and 102-107 (SPERHG).

This sequence belongs to the ArsH family. As to quaternary structure, homotetramer. Requires FMN as cofactor.

Its function is as follows. Has NADPH-dependent FMN reductase activity and high NADPH-dependent ferric reductase activity with highest activity for Fe(3+) as substrate. No activity with NADH, iron trichloride, Cu(2+) or Ag(+). May be involved in cytosolic ferric iron assimilation as an NADPH-dependent ferric reductase in vivo. The chain is NADPH-dependent FMN reductase ArsH from Acidithiobacillus ferrooxidans (strain ATCC 23270 / DSM 14882 / CIP 104768 / NCIMB 8455) (Ferrobacillus ferrooxidans (strain ATCC 23270)).